The sequence spans 969 residues: Alanine--tRNA ligase (969 aa).

A mitochondrion-targeting transit peptide spans 1–8; it reads MIKTLLRR. 4 residues coordinate Zn(2+): His-616, His-620, Cys-735, and His-739.

This sequence belongs to the class-II aminoacyl-tRNA synthetase family. As to quaternary structure, monomer. The cofactor is Zn(2+).

The protein localises to the mitochondrion. It is found in the cytoplasm. It carries out the reaction tRNA(Ala) + L-alanine + ATP = L-alanyl-tRNA(Ala) + AMP + diphosphate. Its function is as follows. Catalyzes the attachment of alanine to tRNA(Ala) in a two-step reaction: alanine is first activated by ATP to form Ala-AMP and then transferred to the acceptor end of tRNA(Ala). Also edits incorrectly charged tRNA(Ala) via its editing domain. The chain is Alanine--tRNA ligase from Candida albicans (strain SC5314 / ATCC MYA-2876) (Yeast).